We begin with the raw amino-acid sequence, 875 residues long: Importin subunit beta-1 (875 aa).

Methionine 1 bears the N-acetylmethionine mark. 5 HEAT repeats span residues 2-31 (ELITILEKTVSPDRLELEAAQKFLERAAVE), 33-64 (LPTFLVELSRVLANPGNSQVARVAAGLQIRLL), 84-122 (ANARREVKNYVLQTLGTETYRPSSASQCVAGIACAEIPV), 128-159 (LIPQLVANVTNPNSTEHMKESTLEAIGYICQD), and 169-201 (SNEILTAIIQGMRKEEPSNNVKLAATNALLNSL). Position 12 is a phosphoserine (serine 12). Residues 21-100 (AQKFLERAAV…KNYVLQTLGT (80 aa)) enclose the Importin N-terminal domain. Lysine 210 bears the N6-acetyllysine mark. HEAT repeat units follow at residues 211-246 (ESERHFIMQVVCEATQCPDTRVRVAALQNLVKIMSL), 252-301 (ETYM…EAAE), 313-359 (YAKG…TCCE), 363-393 (VPHVLPFIKEHIKNPDWRYRDAAVMAFGSIL), 401-437 (LKPLVIQAMPTLIELMKDPSVVVRDTTAWTVGRICEL), 448-484 (LAPLLQCLIEGLSAEPRVASNVCWAFSSLAEAAYEAA), 499-536 (SSSFELIVQKLLETTDRPDGHQNNLRSSAYESLMEIVK), 543-591 (YPAV…QNVL), 599-638 (ALQISDVVMASLLRMFQSTAGSGGVQEDALMAVSTLVEVL), 643-680 (LKYMEAFKPFLGIGLKNYAECQVCLAAVGLVGDLCRAL), 685-723 (LPFCDEVMQLLLENLGNENVHRSVKPQILSVFGDITLAI), 731-775 (LEVV…VQGL), 785-828 (DVML…CTAF), and 830-872 (KDVL…RKLK). The tract at residues 285-461 (VCDEEMDLAI…LQCLIEGLSA (177 aa)) is essential for high affinity interaction with RPL23A. The IAB-binding stretch occupies residues 328–341 (TLTKQDENDDDDDW). Residues 333–418 (DENDDDDDWN…MPTLIELMKD (86 aa)) form a ran-GTP binding region. An N6-acetyllysine mark is found at lysine 834 and lysine 866.

It belongs to the importin beta family. Importin beta-1 subfamily. Forms a complex with an importin alpha subunit. Interacts with XPO1. Forms a heterodimer with IPO7. The KPNB1/IPO7 heterodimer interacts with H1 histone. Interacts with SNUPN. Interacts with H2A, H2B, H3 and H4 histones. Component of an import snRNP complex composed of KPNB1, SNUPN, SMN1 and ZNF259. Component of a nuclear export receptor complex composed of KPNB1, Ran, SNUPN and XPO1. Interacts with SRY. Interacts with PRKCI/atypical protein kinase C iota. Interacts with KPNA2. Interacts with KPNA7. Interacts with SNAI1 (via zinc fingers) and SNAI2 (via zinc fingers). Interacts with SLC35G1 and STIM1. Interacts with DCAF8. Interacts with RAN. Interacts with NUMA1 (via C-terminus); this interaction is inhibited by RanGTP. Interacts with ZBED1/hDREF; required for nuclear import of ZBED1/hDREF. Interacts with SRP19. Interacts with RPL23A (via BIB domain), RPS7 and RPL5. Mono-ADP-ribosylated by PARP16.

It localises to the cytoplasm. The protein localises to the nucleus envelope. Functions in nuclear protein import, either in association with an adapter protein, like an importin-alpha subunit, which binds to nuclear localization signals (NLS) in cargo substrates, or by acting as autonomous nuclear transport receptor. Acting autonomously, serves itself as NLS receptor. Docking of the importin/substrate complex to the nuclear pore complex (NPC) is mediated by KPNB1 through binding to nucleoporin FxFG repeats and the complex is subsequently translocated through the pore by an energy requiring, Ran-dependent mechanism. At the nucleoplasmic side of the NPC, Ran binds to importin-beta and the three components separate and importin-alpha and -beta are re-exported from the nucleus to the cytoplasm where GTP hydrolysis releases Ran from importin. The directionality of nuclear import is thought to be conferred by an asymmetric distribution of the GTP- and GDP-bound forms of Ran between the cytoplasm and nucleus. Mediates autonomously the nuclear import of ribosomal proteins RPL23A, RPS7 and RPL5. In association with IPO7, mediates the nuclear import of H1 histone. In vitro, mediates nuclear import of H2A, H2B, H3 and H4 histones. Imports MRTFA, SNAI1 and PRKCI into the nucleus. This chain is Importin subunit beta-1 (Kpnb1), found in Rattus norvegicus (Rat).